The following is a 155-amino-acid chain: MPKLYEGHLIGQGLRFGIVIGRFNEFITNKLLSGALDALNRHGVADQDIEVAWVPGAFEIPMVARKMASAMKYDAVICLGAVIRGATPHFDYVAGEVAKGVARIGLESGVPTIFGVITADSIEQAIERAGAKAGNKGWDAAVTAIEMANLMKILK.

Residues F23, 57 to 59 (AFE), and 81 to 83 (AVI) contribute to the 5-amino-6-(D-ribitylamino)uracil site. 86-87 (AT) lines the (2S)-2-hydroxy-3-oxobutyl phosphate pocket. The active-site Proton donor is the H89. Residue F114 participates in 5-amino-6-(D-ribitylamino)uracil binding. R128 contributes to the (2S)-2-hydroxy-3-oxobutyl phosphate binding site.

Belongs to the DMRL synthase family.

It carries out the reaction (2S)-2-hydroxy-3-oxobutyl phosphate + 5-amino-6-(D-ribitylamino)uracil = 6,7-dimethyl-8-(1-D-ribityl)lumazine + phosphate + 2 H2O + H(+). Its pathway is cofactor biosynthesis; riboflavin biosynthesis; riboflavin from 2-hydroxy-3-oxobutyl phosphate and 5-amino-6-(D-ribitylamino)uracil: step 1/2. Functionally, catalyzes the formation of 6,7-dimethyl-8-ribityllumazine by condensation of 5-amino-6-(D-ribitylamino)uracil with 3,4-dihydroxy-2-butanone 4-phosphate. This is the penultimate step in the biosynthesis of riboflavin. The chain is 6,7-dimethyl-8-ribityllumazine synthase from Pelotomaculum thermopropionicum (strain DSM 13744 / JCM 10971 / SI).